A 67-amino-acid polypeptide reads, in one-letter code: MPKMKTKSSAKKRFKVTATGKVRAAAAGKRHGMIKRTNKFIRDARGTMVLAEPDGKKVVKNYLPNGL.

It belongs to the bacterial ribosomal protein bL35 family.

This is Large ribosomal subunit protein bL35 from Sinorhizobium fredii (strain NBRC 101917 / NGR234).